A 131-amino-acid chain; its full sequence is Profilin-7 (131 aa).

The cysteines at positions 13 and 115 are disulfide-linked. The Involved in PIP2 interaction signature appears at 81–97 (AVIRGKKGSGGITVKKT). A Phosphothreonine modification is found at T111.

The protein belongs to the profilin family. Occurs in many kinds of cells as a complex with monomeric actin in a 1:1 ratio. Post-translationally, phosphorylated by MAP kinases.

It is found in the cytoplasm. The protein localises to the cytoskeleton. Binds to actin and affects the structure of the cytoskeleton. At high concentrations, profilin prevents the polymerization of actin, whereas it enhances it at low concentrations. In Zea mays (Maize), this protein is Profilin-7.